The primary structure comprises 695 residues: Threonine--tRNA ligase (695 aa).

In terms of domain architecture, TGS spans M1–A66. The segment at D263–P569 is catalytic. Positions 368, 419, and 546 each coordinate Zn(2+).

It belongs to the class-II aminoacyl-tRNA synthetase family. As to quaternary structure, homodimer. Requires Zn(2+) as cofactor.

Its subcellular location is the cytoplasm. It carries out the reaction tRNA(Thr) + L-threonine + ATP = L-threonyl-tRNA(Thr) + AMP + diphosphate + H(+). In terms of biological role, catalyzes the attachment of threonine to tRNA(Thr) in a two-step reaction: L-threonine is first activated by ATP to form Thr-AMP and then transferred to the acceptor end of tRNA(Thr). Also edits incorrectly charged L-seryl-tRNA(Thr). This Mycolicibacterium gilvum (strain PYR-GCK) (Mycobacterium gilvum (strain PYR-GCK)) protein is Threonine--tRNA ligase.